Reading from the N-terminus, the 556-residue chain is 2-succinyl-5-enolpyruvyl-6-hydroxy-3-cyclohexene-1-carboxylate synthase (556 aa).

The protein belongs to the TPP enzyme family. MenD subfamily. Homodimer. Mg(2+) serves as cofactor. Mn(2+) is required as a cofactor. The cofactor is thiamine diphosphate.

The catalysed reaction is isochorismate + 2-oxoglutarate + H(+) = 5-enolpyruvoyl-6-hydroxy-2-succinyl-cyclohex-3-ene-1-carboxylate + CO2. It functions in the pathway quinol/quinone metabolism; 1,4-dihydroxy-2-naphthoate biosynthesis; 1,4-dihydroxy-2-naphthoate from chorismate: step 2/7. Its pathway is quinol/quinone metabolism; menaquinone biosynthesis. Its function is as follows. Catalyzes the thiamine diphosphate-dependent decarboxylation of 2-oxoglutarate and the subsequent addition of the resulting succinic semialdehyde-thiamine pyrophosphate anion to isochorismate to yield 2-succinyl-5-enolpyruvyl-6-hydroxy-3-cyclohexene-1-carboxylate (SEPHCHC). The protein is 2-succinyl-5-enolpyruvyl-6-hydroxy-3-cyclohexene-1-carboxylate synthase of Staphylococcus haemolyticus (strain JCSC1435).